A 306-amino-acid polypeptide reads, in one-letter code: MSNDALISALSHLVSEGRNPDTMDIDLLTSLEVVEKINQQDKQVPLAIEAELPQIAKAVDKIAQAFQNGGRLIYMGAGTSGRLGVLDASECPPTFGVSDKMVIGLIAGGPEAILKAKEGAEDSLTLGIEDLKAIQFSENDVVVGIAASGRTPYVIGALNYANQLGAVTVALSCNPDSPIAEIAQIAISPVVGPEALTGSTRLKSGTAQKLVLNMLTTASMIRIGKSYQNLMVDVKATNEKLVARAARIVIQATECEKALAVSTLKATDYDVKLSILMILTGLDLELAKAQLDKQNGFLRKAVENNQ.

In terms of domain architecture, SIS spans Ile-62–Lys-225. Glu-90 acts as the Proton donor in catalysis. The active site involves Glu-121.

This sequence belongs to the GCKR-like family. MurNAc-6-P etherase subfamily. In terms of assembly, homodimer.

The enzyme catalyses N-acetyl-D-muramate 6-phosphate + H2O = N-acetyl-D-glucosamine 6-phosphate + (R)-lactate. It functions in the pathway amino-sugar metabolism; 1,6-anhydro-N-acetylmuramate degradation. Its pathway is amino-sugar metabolism; N-acetylmuramate degradation. It participates in cell wall biogenesis; peptidoglycan recycling. In terms of biological role, specifically catalyzes the cleavage of the D-lactyl ether substituent of MurNAc 6-phosphate, producing GlcNAc 6-phosphate and D-lactate. Together with AnmK, is also required for the utilization of anhydro-N-acetylmuramic acid (anhMurNAc) either imported from the medium or derived from its own cell wall murein, and thus plays a role in cell wall recycling. The sequence is that of N-acetylmuramic acid 6-phosphate etherase from Vibrio atlanticus (strain LGP32) (Vibrio splendidus (strain Mel32)).